Consider the following 225-residue polypeptide: Cytidylate kinase (225 aa).

12-20 (GPSGAGKGT) serves as a coordination point for ATP.

It belongs to the cytidylate kinase family. Type 1 subfamily.

It is found in the cytoplasm. The catalysed reaction is CMP + ATP = CDP + ADP. It carries out the reaction dCMP + ATP = dCDP + ADP. This Pectobacterium atrosepticum (strain SCRI 1043 / ATCC BAA-672) (Erwinia carotovora subsp. atroseptica) protein is Cytidylate kinase.